We begin with the raw amino-acid sequence, 473 residues long: Inactive pancreatic lipase-related protein 1 (473 aa).

Positions Met-1–Gly-17 are cleaved as a signal peptide. Intrachain disulfides connect Cys-21/Cys-27 and Cys-109/Cys-120. Ser-171 serves as the catalytic Nucleophile. Catalysis depends on Asp-194, which acts as the Charge relay system. Ca(2+)-binding residues include Glu-205, Arg-208, Asp-210, and Asp-213. The cysteines at positions 255 and 279 are disulfide-linked. The active-site Charge relay system is His-281. Cystine bridges form between Cys-303-Cys-314, Cys-317-Cys-322, and Cys-451-Cys-467. Residues Trp-356–Cys-467 form the PLAT domain.

This sequence belongs to the AB hydrolase superfamily. Lipase family. Expressed in female, but not in male, lacrimal gland. Expressed in male and female sublingual gland and pancreas.

The protein resides in the secreted. In terms of biological role, may function as inhibitor of dietary triglyceride digestion. Lacks detectable lipase activity (in vitro). This Mus musculus (Mouse) protein is Inactive pancreatic lipase-related protein 1 (Pnliprp1).